Here is a 409-residue protein sequence, read N- to C-terminus: Growth-regulating factor 8 (409 aa).

2 stretches are compositionally biased toward gly residues: residues 1–10 (MLSSCGGHGH) and 27–36 (QQGGGGGGGQ). The tract at residues 1-81 (MLSSCGGHGH…GGGGQMLSFS (81 aa)) is disordered. Positions 56-68 (SSSSFLGSTSSSC) are enriched in low complexity. Residues 107–142 (PFTPTQWMELEHQALIYKHIAANVSVPSSLLLPIRR) form the QLQ domain. The WRC domain maps to 158 to 202 (DVEPRRCRRTDGKKWRCSRDAVGDQKYCERHINRGRHRSRKHVEG). Short sequence motifs (bipartite nuclear localization signal) lie at residues 163 to 173 (RCRRTDGKKWR) and 191 to 198 (RGRHRSRK). Residues 221–242 (SSRGHTVARQKQVKGSAATVSD) are disordered.

Belongs to the GRF family.

It is found in the nucleus. Functionally, transcription activator that plays a regulatory role in gibberellin-induced stem elongation. This Oryza sativa subsp. japonica (Rice) protein is Growth-regulating factor 8 (GRF8).